We begin with the raw amino-acid sequence, 405 residues long: CMP-sialic acid transporter 5 (405 aa).

The Cytoplasmic segment spans residues 1–43 (MQRNGVVECSVCRSRLVVPSPRSVSRAYDKHRSKISSKFRALN). The chain crosses the membrane as a helical span at residues 44–64 (VLLVVGDCILVGLQPILVFMS). At 65–74 (KVDGKFQFSP) the chain is on the lumenal side. Residues 75–95 (ISVNFLTEVTKVVFAIVMLII) form a helical membrane-spanning segment. The Cytoplasmic portion of the chain corresponds to 96 to 121 (QSRKQKVGEKPLLARSTFIQAARNNA). A helical membrane pass occupies residues 122-142 (LLAVPALLYAINNYLKFIMQL). The Lumenal portion of the chain corresponds to 143–147 (YFNPS). Residues 148-168 (TVKMLSNLKVLVIAVLLKFIM) traverse the membrane as a helical segment. Residues 169-171 (KRR) are Cytoplasmic-facing. A helical transmembrane segment spans residues 172-192 (FSVIQWEALALLLIGISINQL). Topologically, residues 193 to 200 (RTVPAGNT) are lumenal. The helical transmembrane segment at 201–221 (AFGLPVTAIAYIYTLIFVTVP) threads the bilayer. The Cytoplasmic portion of the chain corresponds to 222–244 (SLASVYNEYALKSQYDTSIYLQN). Residues 245–265 (LFLYGYGAIFNFLGILGTALF) traverse the membrane as a helical segment. At 266–281 (QGPESFNILRGHSRAT) the chain is on the lumenal side. The helical transmembrane segment at 282–302 (MFLICNNAAQGILSSFFFKYA) threads the bilayer. Topologically, residues 303-322 (DTILKKYSSTVATIFTGLAS) are cytoplasmic. Residues 323–343 (AAFLGHTLTINFLLGISVVFI) form a helical membrane-spanning segment. Residues 344–405 (SMHQFFSPLA…TDERQPLLPT (62 aa)) are Lumenal-facing. Residues 368 to 405 (DTQNHRSSESSFVNMTAGAAEDASHRIGTDERQPLLPT) are disordered. Residues 389-405 (DASHRIGTDERQPLLPT) are compositionally biased toward basic and acidic residues.

Belongs to the nucleotide-sugar transporter family. CMP-Sialate:CMP antiporter (TC 2.A.7.12) subfamily.

The protein resides in the golgi apparatus membrane. Functionally, sugar transporter involved in the transport of CMP-sialic acid from the cytoplasm into the Golgi. May transport important nucleotide sugars such as CMP-Kdo (2-keto-3-deoxy-D-manno-octulosonic acid) in physiological conditions. This Oryza sativa subsp. japonica (Rice) protein is CMP-sialic acid transporter 5.